A 957-amino-acid chain; its full sequence is Glycine dehydrogenase (decarboxylating) (957 aa).

Position 708 is an N6-(pyridoxal phosphate)lysine (lysine 708).

It belongs to the GcvP family. As to quaternary structure, the glycine cleavage system is composed of four proteins: P, T, L and H. Pyridoxal 5'-phosphate is required as a cofactor.

The catalysed reaction is N(6)-[(R)-lipoyl]-L-lysyl-[glycine-cleavage complex H protein] + glycine + H(+) = N(6)-[(R)-S(8)-aminomethyldihydrolipoyl]-L-lysyl-[glycine-cleavage complex H protein] + CO2. In terms of biological role, the glycine cleavage system catalyzes the degradation of glycine. The P protein binds the alpha-amino group of glycine through its pyridoxal phosphate cofactor; CO(2) is released and the remaining methylamine moiety is then transferred to the lipoamide cofactor of the H protein. The protein is Glycine dehydrogenase (decarboxylating) of Shigella boydii serotype 4 (strain Sb227).